Consider the following 213-residue polypeptide: CDP-diacylglycerol--inositol 3-phosphatidyltransferase (213 aa).

The Cytoplasmic portion of the chain corresponds to 1–5 (MPDEN). A helical membrane pass occupies residues 6-26 (IFLFVPNLIGYARIVFAIISF). Residue Y27 is a topological domain, lumenal. The chain crosses the membrane as a helical span at residues 28–48 (FMPCCPLTASSFYLLSGLLDA). 2 residues coordinate Mg(2+): D47 and D50. The Cytoplasmic portion of the chain corresponds to 49-73 (FDGHAARALNQGTRFGAMLDMLTDR). Residues G51, R55, and T61 each coordinate a CDP-1,2-diacyl-sn-glycerol. The Mg(2+) site is built by D68 and D72. Residue D72 is the Proton acceptor of the active site. A helical membrane pass occupies residues 74–94 (CSTMCLLVNLALLYPGATLFF). Residue Q95 is a topological domain, lumenal. Residues 96–116 (ISMSLDVASHWLHLHSSVVRG) traverse the membrane as a helical segment. At 117–139 (SESHKMIDLSGNPVLRIYYTSRP) the chain is on the cytoplasmic side. A helical membrane pass occupies residues 140–160 (ALFTLCAGNELFYCLLYLFHF). Over 161–174 (SEGPLVGSVGLFRM) the chain is Lumenal. A helical membrane pass occupies residues 175-195 (GLWVTAPIALLKSLISVIHLI). At 196 to 213 (TAARNMAALDAADRAKKK) the chain is on the cytoplasmic side.

It belongs to the CDP-alcohol phosphatidyltransferase class-I family. Requires Mn(2+) as cofactor. Mg(2+) serves as cofactor. In terms of tissue distribution, detected in placenta (at protein level). Widely expressed. Higher expression in adult liver and skeletal muscle, slightly lower levels seen in pancreas, kidney, lung, placenta, brain, heart, leukocyte, colon, small intestine, ovary, testis, prostate, thymus and spleen. In fetus, expressed in kidney, liver, lung and brain.

Its subcellular location is the endoplasmic reticulum membrane. The protein resides in the cell membrane. The catalysed reaction is a CDP-1,2-diacyl-sn-glycerol + myo-inositol = a 1,2-diacyl-sn-glycero-3-phospho-(1D-myo-inositol) + CMP + H(+). With respect to regulation, inhibited by PtdIns (product inhibition), phosphatidylinositol phosphate, and nucleoside di- and tri-phosphates. In terms of biological role, catalyzes the biosynthesis of phosphatidylinositol (PtdIns) as well as PtdIns:inositol exchange reaction. May thus act to reduce an excessive cellular PtdIns content. The exchange activity is due to the reverse reaction of PtdIns synthase and is dependent on CMP, which is tightly bound to the enzyme. This is CDP-diacylglycerol--inositol 3-phosphatidyltransferase from Homo sapiens (Human).